A 391-amino-acid polypeptide reads, in one-letter code: Polysialic acid biosynthesis protein P7 (391 aa).

May be involved in the synthesis of polysialic acid (PSA). The polypeptide is Polysialic acid biosynthesis protein P7 (neuC) (Escherichia coli).